The primary structure comprises 359 residues: S-adenosylmethionine:tRNA ribosyltransferase-isomerase (359 aa).

The protein belongs to the QueA family. In terms of assembly, monomer.

The protein localises to the cytoplasm. The enzyme catalyses 7-aminomethyl-7-carbaguanosine(34) in tRNA + S-adenosyl-L-methionine = epoxyqueuosine(34) in tRNA + adenine + L-methionine + 2 H(+). It functions in the pathway tRNA modification; tRNA-queuosine biosynthesis. Functionally, transfers and isomerizes the ribose moiety from AdoMet to the 7-aminomethyl group of 7-deazaguanine (preQ1-tRNA) to give epoxyqueuosine (oQ-tRNA). This chain is S-adenosylmethionine:tRNA ribosyltransferase-isomerase, found in Ralstonia pickettii (strain 12J).